The sequence spans 59 residues: Large ribosomal subunit protein bL32 (59 aa).

Residues 1–59 (MAVQQNKKSPSKRGMHRSHDHLSVAPLAVEPTTGETHLRHHVSPNGYYRGRKVIKTKND) are disordered. Composition is skewed to basic residues over residues 9-19 (SPSKRGMHRSH) and 49-59 (RGRKVIKTKND).

The protein belongs to the bacterial ribosomal protein bL32 family.

The protein is Large ribosomal subunit protein bL32 of Cupriavidus metallidurans (strain ATCC 43123 / DSM 2839 / NBRC 102507 / CH34) (Ralstonia metallidurans).